Consider the following 298-residue polypeptide: Syntaxin-4 (298 aa).

At 1-274 (MRDRTHELRQ…NQKKARKKKV (274 aa)) the chain is on the cytoplasmic side. Residues serine 15, serine 29, serine 36, serine 117, serine 208, and serine 248 each carry the phosphoserine modification. Residues 38 to 163 (DDEFFQKVQT…ERIRRQLKIT (126 aa)) are a coiled coil. Positions 154–298 (ERIRRQLKIT…VIIGITITVG (145 aa)) are interaction with CENPF. Residues 200 to 262 (LNEISARHSE…ERGQEHVKIA (63 aa)) enclose the t-SNARE coiled-coil homology domain. A helical; Anchor for type IV membrane protein transmembrane segment spans residues 275–295 (MIAICVSVTVLILAVIIGITI). The Extracellular segment spans residues 296–298 (TVG).

Belongs to the syntaxin family. As to quaternary structure, interacts with STXBP6. Component of the SNARE complex composed of STX4, SNAP23 and VAMP7 that interacts with SYT7 during lysosomal exocytosis. Found in a complex with VAMP8 and SNAP23. Detected in a complex with SNAP23 and STXBP4. Interacts with VAMP2. Interacts with SNAP23 and SNAPIN. Interacts with LLGL1. Interacts (via C-terminus) with CENPF. Interacts with DOC2B. Interacts with STXBP3; excludes interaction with DOC2B and SNAP25. Interacts with STXBP4; excludes interaction with VAMP2. Interacts with STXBP5L. Expressed in the outer and inner hair cells of the cochlea.

The protein localises to the cell membrane. The protein resides in the cell projection. Its subcellular location is the neuron projection. It is found in the stereocilium. Plasma membrane t-SNARE that mediates docking of transport vesicles. Necessary for the translocation of SLC2A4 from intracellular vesicles to the plasma membrane. In neurons, recruited at neurite tips to membrane domains rich in the phospholipid 1-oleoyl-2-palmitoyl-PC (OPPC) which promotes neurite tip surface expression of the dopamine transporter SLC6A3/DAT by facilitating fusion of SLC6A3-containing transport vesicles with the plasma membrane. Together with STXB3 and VAMP2, may also play a role in docking/fusion of intracellular GLUT4-containing vesicles with the cell surface in adipocytes and in docking of synaptic vesicles at presynaptic active zones. Required for normal hearing. The chain is Syntaxin-4 (Stx4) from Mus musculus (Mouse).